A 131-amino-acid polypeptide reads, in one-letter code: Small ribosomal subunit protein bS6 (131 aa).

The segment at 98 to 131 (EASPMVKAKDERRERREDFANETSEETEAGDSEE) is disordered. Residues 104–116 (KAKDERRERREDF) show a composition bias toward basic and acidic residues. A compositionally biased stretch (acidic residues) spans 120-131 (TSEETEAGDSEE).

The protein belongs to the bacterial ribosomal protein bS6 family.

Binds together with bS18 to 16S ribosomal RNA. The chain is Small ribosomal subunit protein bS6 from Edwardsiella ictaluri (strain 93-146).